Here is a 98-residue protein sequence, read N- to C-terminus: snRNA-activating protein complex subunit 5 (98 aa).

Residues 75-98 (ALELSTRSHVQEEEEEEEEEEEDS) form a disordered region. The span at 86–98 (EEEEEEEEEEEDS) shows a compositional bias: acidic residues.

As to quaternary structure, part of the SNAPc complex composed of 5 subunits: SNAPC1, SNAPC2, SNAPC3, SNAPC4 and SNAPC5. SNAPC5 interacts with SNAPC4.

Its subcellular location is the nucleus. Functionally, part of the SNAPc complex required for the transcription of both RNA polymerase II and III small-nuclear RNA genes. Binds to the proximal sequence element (PSE), a non-TATA-box basal promoter element common to these 2 types of genes. Recruits TBP and BRF2 to the U6 snRNA TATA box. This Bos taurus (Bovine) protein is snRNA-activating protein complex subunit 5 (SNAPC5).